A 227-amino-acid polypeptide reads, in one-letter code: 7-cyano-7-deazaguanine synthase (227 aa).

Residue 9–19 coordinates ATP; that stretch reads LSGGLDSATVL. Zn(2+)-binding residues include cysteine 189, cysteine 199, cysteine 202, and cysteine 205.

It belongs to the QueC family. Zn(2+) is required as a cofactor.

It catalyses the reaction 7-carboxy-7-deazaguanine + NH4(+) + ATP = 7-cyano-7-deazaguanine + ADP + phosphate + H2O + H(+). It functions in the pathway purine metabolism; 7-cyano-7-deazaguanine biosynthesis. Catalyzes the ATP-dependent conversion of 7-carboxy-7-deazaguanine (CDG) to 7-cyano-7-deazaguanine (preQ(0)). In Cupriavidus taiwanensis (strain DSM 17343 / BCRC 17206 / CCUG 44338 / CIP 107171 / LMG 19424 / R1) (Ralstonia taiwanensis (strain LMG 19424)), this protein is 7-cyano-7-deazaguanine synthase.